Reading from the N-terminus, the 1687-residue chain is Brefeldin A-inhibited guanine nucleotide-exchange protein 1 (1687 aa).

The tract at residues 494–529 (SLENEAPANNHSNSNEEDGTTIDHDFHPDLNPESSD) is disordered. Residues 514 to 523 (TIDHDFHPDL) show a composition bias toward basic and acidic residues. Positions 532 to 719 (TLEQRRAYKI…GALYDQVVIN (188 aa)) constitute an SEC7 domain. Residue Glu-634 is part of the active site. The tract at residues 1229-1248 (KGRSSSPSTPVTDDHSPSTQ) is disordered. The span at 1232–1248 (SSSPSTPVTDDHSPSTQ) shows a compositional bias: polar residues.

As to quaternary structure, homodimer.

It localises to the cytoplasm. Its subcellular location is the cytosol. It is found in the membrane. With respect to regulation, inhibited by brefeldin A. Its function is as follows. Activates the ARF proteins by exchanging bound GDP for free GTP. Plays a role in vesicular protein sorting. The sequence is that of Brefeldin A-inhibited guanine nucleotide-exchange protein 1 (BIG1) from Arabidopsis thaliana (Mouse-ear cress).